The chain runs to 993 residues: ATP-dependent DNA helicase MPH1 (993 aa).

The region spanning Ile94 to Lys261 is the Helicase ATP-binding domain. ATP is bound at residue Ile107–Thr114. The DEAH box signature appears at Asp209–His212. The Helicase C-terminal domain occupies Lys507–Ile655. The tract at residues Asn530–Met551 is disordered. Residues Arg539 to Met551 show a composition bias toward polar residues.

This sequence belongs to the DEAD box helicase family. DEAH subfamily. FANCM sub-subfamily. In terms of assembly, interacts with the MHF histone-fold complex to form the FANCM-MHF complex.

The protein localises to the nucleus. The enzyme catalyses ATP + H2O = ADP + phosphate + H(+). In terms of biological role, ATP-dependent DNA helicase involved in DNA damage repair by homologous recombination and in genome maintenance. Capable of unwinding D-loops. Plays a role in limiting crossover recombinants during mitotic DNA double-strand break (DSB) repair. Component of a FANCM-MHF complex which promotes gene conversion at blocked replication forks, probably by reversal of the stalled fork. The polypeptide is ATP-dependent DNA helicase MPH1 (Saccharomyces cerevisiae (strain YJM789) (Baker's yeast)).